A 494-amino-acid chain; its full sequence is Probable cytosol aminopeptidase (494 aa).

Mn(2+) contacts are provided by K260 and D265. K272 is an active-site residue. Residues D283, D342, and E344 each contribute to the Mn(2+) site. Residue R346 is part of the active site.

The protein belongs to the peptidase M17 family. Mn(2+) is required as a cofactor.

It is found in the cytoplasm. It catalyses the reaction Release of an N-terminal amino acid, Xaa-|-Yaa-, in which Xaa is preferably Leu, but may be other amino acids including Pro although not Arg or Lys, and Yaa may be Pro. Amino acid amides and methyl esters are also readily hydrolyzed, but rates on arylamides are exceedingly low.. The catalysed reaction is Release of an N-terminal amino acid, preferentially leucine, but not glutamic or aspartic acids.. Presumably involved in the processing and regular turnover of intracellular proteins. Catalyzes the removal of unsubstituted N-terminal amino acids from various peptides. The protein is Probable cytosol aminopeptidase of Bacillus anthracis (strain CDC 684 / NRRL 3495).